The primary structure comprises 98 residues: uncharacterized protein (98 aa).

Residues Lys30–Glu98 form the MOSC domain.

This is an uncharacterized protein from Haemophilus influenzae (strain ATCC 51907 / DSM 11121 / KW20 / Rd).